Here is a 430-residue protein sequence, read N- to C-terminus: Serine--tRNA ligase (430 aa).

234–236 (TAE) is a binding site for L-serine. 265 to 267 (RRE) lines the ATP pocket. Residue E288 coordinates L-serine. Position 352-355 (352-355 (EISS)) interacts with ATP. S388 is an L-serine binding site.

It belongs to the class-II aminoacyl-tRNA synthetase family. Type-1 seryl-tRNA synthetase subfamily. Homodimer. The tRNA molecule binds across the dimer.

It is found in the cytoplasm. The enzyme catalyses tRNA(Ser) + L-serine + ATP = L-seryl-tRNA(Ser) + AMP + diphosphate + H(+). The catalysed reaction is tRNA(Sec) + L-serine + ATP = L-seryl-tRNA(Sec) + AMP + diphosphate + H(+). It participates in aminoacyl-tRNA biosynthesis; selenocysteinyl-tRNA(Sec) biosynthesis; L-seryl-tRNA(Sec) from L-serine and tRNA(Sec): step 1/1. In terms of biological role, catalyzes the attachment of serine to tRNA(Ser). Is also able to aminoacylate tRNA(Sec) with serine, to form the misacylated tRNA L-seryl-tRNA(Sec), which will be further converted into selenocysteinyl-tRNA(Sec). The sequence is that of Serine--tRNA ligase from Thermosynechococcus vestitus (strain NIES-2133 / IAM M-273 / BP-1).